The sequence spans 343 residues: MTPHLALCFILLIQQVASQKCPSQCDQCPEEPPSCAPSVLLILDGCGCCPVCARQEGESCSHLNPCQEDKGLYCEFNADPRMETGTCMALEGNSCVFDGVVYRNRESFQPSCKYHCTCLNGHIGCVPRCNLDLLLPGPDCPFPRRVKVPGECCEKWVCDSKEEMAIGGFAMAAYRPEATLGIDASDTSFACIAQTTEWSACSKTCGMGVSSRVTNRNARCEMQKQIRLCMVRSCEEEPGWHVEKKGKKCVRVRKTTKPIHFHYKNCTSVQPYKPKFCGQCSDGRCCTPHSTKTMHVEFVCPQKRIVKKPVMVISTCVCHYNCPQDSSLLQVENARFPGLKTNL.

Residues Met-1–Ser-18 form the signal peptide. The IGFBP N-terminal domain occupies Gln-19–Leu-90. 6 cysteine pairs are disulfide-bonded: Cys-21–Cys-46, Cys-25–Cys-48, Cys-28–Cys-49, Cys-35–Cys-52, Cys-60–Cys-74, and Cys-66–Cys-87. Positions Asn-93 to Asp-159 constitute a VWFC domain. One can recognise a TSP type-1 domain in the interval Ala-190 to Glu-235. 5 disulfides stabilise this stretch: Cys-249-Cys-286, Cys-266-Cys-300, Cys-277-Cys-316, Cys-280-Cys-318, and Cys-285-Cys-322. Residues Cys-249–Pro-323 enclose the CTCK domain. N-linked (GlcNAc...) asparagine glycosylation occurs at Asn-265.

It belongs to the CCN family.

The protein localises to the secreted. It is found in the cytoplasm. Its subcellular location is the cell junction. It localises to the gap junction. In terms of biological role, immediate-early protein playing a role in various cellular processes including proliferation, adhesion, migration, differentiation and survival. Acts by binding to integrins or membrane receptors such as NOTCH1. This is CCN family member 3 (ccn3) from Xenopus laevis (African clawed frog).